We begin with the raw amino-acid sequence, 605 residues long: Protein Spindly (605 aa).

M1 is subject to N-acetylmethionine. A coiled-coil region spans residues 2-442 (EADIITNLRC…ELKLKYEPEE (441 aa)). Residues S513, S515, and S555 each carry the phosphoserine modification. The tract at residues 544-580 (ALSERSGNTPNSPRLAAESKLQTEVKEGKETSSKLEK) is disordered. Basic and acidic residues predominate over residues 564–580 (LQTEVKEGKETSSKLEK).

Belongs to the Spindly family. As to quaternary structure, interacts with KNTC1 and ZW10. These interactions appear weak and may be transient or indirect. Interacts with dynein intermediate chain and dynactin (DCTN1). Interacts with the catalytically active form of USP45. In terms of processing, monoubiquitinated with'Lys-48' linkage. Deubiquitinated by USP45.

It is found in the cytoplasm. The protein resides in the cytoskeleton. The protein localises to the microtubule organizing center. Its subcellular location is the centrosome. It localises to the chromosome. It is found in the centromere. The protein resides in the kinetochore. The protein localises to the nucleus. Its subcellular location is the spindle pole. Its function is as follows. Required for the localization of dynein and dynactin to the mitotic kintochore. Dynein is believed to control the initial lateral interaction between the kinetochore and spindle microtubules and to facilitate the subsequent formation of end-on kinetochore-microtubule attachments mediated by the NDC80 complex. Also required for correct spindle orientation. Does not appear to be required for the removal of spindle assembly checkpoint (SAC) proteins from the kinetochore upon bipolar spindle attachment. Acts as an adapter protein linking the dynein motor complex to various cargos and converts dynein from a non-processive to a highly processive motor in the presence of dynactin. Facilitates the interaction between dynein and dynactin and activates dynein processivity (the ability to move along a microtubule for a long distance without falling off the track). Plays a role in cell migration. The protein is Protein Spindly of Homo sapiens (Human).